The following is a 196-amino-acid chain: Large ribosomal subunit protein eL15 (196 aa).

Over residues 162 to 172 (RGKTSAGRRAR) the composition is skewed to basic residues. Residues 162–196 (RGKTSAGRRARGLQNRGKGTEGLRPSTNADKRNKS) form a disordered region.

This sequence belongs to the eukaryotic ribosomal protein eL15 family.

The chain is Large ribosomal subunit protein eL15 from Halobacterium salinarum (strain ATCC 29341 / DSM 671 / R1).